The sequence spans 553 residues: Methyl-coenzyme M reductase I subunit alpha (553 aa).

Q150 serves as a coordination point for coenzyme F430. Coenzyme B contacts are provided by residues R228, 259–260 (KH), and R273. R274 carries the 5-methylarginine modification. Coenzyme M contacts are provided by Y335 and Y447.

It belongs to the methyl-coenzyme M reductase alpha subunit family. As to quaternary structure, MCR is a hexamer of two alpha, two beta, and two gamma chains, forming a dimer of heterotrimers. Coenzyme F430 is required as a cofactor. Is methylated on C5 of Arg-274 by the methyltransferase MJ0841. This post-translational methylation, despite being not essential in vivo, plays a role for the stability and structural integrity of MCR.

It is found in the cytoplasm. It catalyses the reaction coenzyme B + methyl-coenzyme M = methane + coenzyme M-coenzyme B heterodisulfide. It functions in the pathway one-carbon metabolism; methyl-coenzyme M reduction; methane from methyl-coenzyme M: step 1/1. In terms of biological role, component of the methyl-coenzyme M reductase (MCR) I that catalyzes the reductive cleavage of methyl-coenzyme M (CoM-S-CH3 or 2-(methylthio)ethanesulfonate) using coenzyme B (CoB or 7-mercaptoheptanoylthreonine phosphate) as reductant which results in the production of methane and the mixed heterodisulfide of CoB and CoM (CoM-S-S-CoB). This is the final step in methanogenesis. This is Methyl-coenzyme M reductase I subunit alpha (mcrA) from Methanocaldococcus jannaschii (strain ATCC 43067 / DSM 2661 / JAL-1 / JCM 10045 / NBRC 100440) (Methanococcus jannaschii).